The following is a 783-amino-acid chain: Isoamylase 1, chloroplastic (783 aa).

A chloroplast-targeting transit peptide spans Met-1 to Ser-43. Asp-410 (nucleophile) is an active-site residue. Glu-466 (proton donor) is an active-site residue.

It belongs to the glycosyl hydrolase 13 family. Associates with ISA2 to form the heteromultimeric complex Iso1 required for amylopectin synthesis.

It is found in the plastid. The protein localises to the chloroplast. It catalyses the reaction Hydrolysis of (1-&gt;6)-alpha-D-glucosidic branch linkages in glycogen, amylopectin and their beta-limit dextrins.. Its pathway is glycan biosynthesis; starch biosynthesis. Involved in the trimming of pre-amylopectin chains. Accelerates the crystallization of nascent amylopectin molecules during starch synthesis. ISA1 and ISA2 work exclusively together as a multimeric holoenzyme. ISA1-ISA2 removes preferentially branches that are very close to other branches. Promotes negative gravitropic responses in shoots by facilitating starch granules (statoliths) formation in hypocotyls. This is Isoamylase 1, chloroplastic from Arabidopsis thaliana (Mouse-ear cress).